We begin with the raw amino-acid sequence, 186 residues long: Ribosome-recycling factor (186 aa).

This sequence belongs to the RRF family.

Its subcellular location is the cytoplasm. Functionally, responsible for the release of ribosomes from messenger RNA at the termination of protein biosynthesis. May increase the efficiency of translation by recycling ribosomes from one round of translation to another. This is Ribosome-recycling factor from Rickettsia massiliae (strain Mtu5).